The primary structure comprises 300 residues: MNTLVLKIDTILSKHLKKQLAPYTISSQNTYVAFAAKKNGVTVLLYKSGKLVLQGNGANALAQELNLPVAKTVFEASNNSQDIPIIGSDEVGNGSYFGGIAVVASFVDPKDHSFLKKLGVDDSKKLSDKTIQQIAPLLEKQIPHQSLLLSPKKYNELVGKSKPYNAISIKVALHNQAIFLLLQKGIQPKQIVIDAFTSQSNYEKHLKKEKNHFPNPLTFQEKAESHYLAVAVSSIIARNLFLDNLDQLGQDLGYQLPSGAGSASDKVASQLLAAYGMSSLEYSAKLHFANTHKAQALLTK.

An RNase H type-2 domain is found at 83–300 (IPIIGSDEVG…THKAQALLTK (218 aa)). A divalent metal cation is bound by residues D89, E90, and D194.

Belongs to the RNase HII family. RnhC subfamily. The cofactor is Mn(2+). Mg(2+) is required as a cofactor.

The protein localises to the cytoplasm. The catalysed reaction is Endonucleolytic cleavage to 5'-phosphomonoester.. In terms of biological role, endonuclease that specifically degrades the RNA of RNA-DNA hybrids. In Streptococcus pyogenes serotype M5 (strain Manfredo), this protein is Ribonuclease HIII.